The chain runs to 296 residues: Nucleotide-binding protein Pnec_1620 (296 aa).

An ATP-binding site is contributed by 8–15; it reads GISGSGKS. 57–60 provides a ligand contact to GTP; it reads DARR.

It belongs to the RapZ-like family.

Functionally, displays ATPase and GTPase activities. The polypeptide is Nucleotide-binding protein Pnec_1620 (Polynucleobacter necessarius subsp. necessarius (strain STIR1)).